A 576-amino-acid polypeptide reads, in one-letter code: Arginine--tRNA ligase (576 aa).

The short motif at 122-132 (PNVAKQMHVGH) is the 'HIGH' region element.

This sequence belongs to the class-I aminoacyl-tRNA synthetase family. In terms of assembly, monomer.

It is found in the cytoplasm. The catalysed reaction is tRNA(Arg) + L-arginine + ATP = L-arginyl-tRNA(Arg) + AMP + diphosphate. This is Arginine--tRNA ligase from Photorhabdus laumondii subsp. laumondii (strain DSM 15139 / CIP 105565 / TT01) (Photorhabdus luminescens subsp. laumondii).